A 436-amino-acid polypeptide reads, in one-letter code: Adenylosuccinate synthetase (436 aa).

Residues 12–18 (GDEGKGK) and 40–42 (GHT) each bind GTP. The active-site Proton acceptor is the D13. D13 and G40 together coordinate Mg(2+). Residues 13–16 (DEGK), 38–41 (NAGH), T128, R142, Q223, T238, and R302 each bind IMP. Residue H41 is the Proton donor of the active site. Position 298–304 (298–304 (TTTGRRR)) interacts with substrate. GTP-binding positions include R304, 330-332 (KLD), and 412-414 (SLG).

This sequence belongs to the adenylosuccinate synthetase family. Homodimer. Mg(2+) serves as cofactor.

The protein localises to the cytoplasm. The catalysed reaction is IMP + L-aspartate + GTP = N(6)-(1,2-dicarboxyethyl)-AMP + GDP + phosphate + 2 H(+). The protein operates within purine metabolism; AMP biosynthesis via de novo pathway; AMP from IMP: step 1/2. Plays an important role in the de novo pathway of purine nucleotide biosynthesis. Catalyzes the first committed step in the biosynthesis of AMP from IMP. This chain is Adenylosuccinate synthetase, found in Prochlorococcus marinus (strain MIT 9515).